The primary structure comprises 147 residues: MVNLTAAEKTQVTNLWGKVNVKELGGEALSRLLVVYPWTRRFFEHFGDLSTAEAVLHNAKVLAHGEKVLTSFGEGLKHLDNLKGTFADLSELHCDKLHVDPENFRLLGNVLVIVLARHFGKEFTPDVQAAYEKVVAGVANALAHKYH.

One can recognise a Globin domain in the interval 3-147 (NLTAAEKTQV…VANALAHKYH (145 aa)). Positions 64 and 93 each coordinate heme b.

Belongs to the globin family. In terms of assembly, heterotetramer of two delta chains and two alpha chains. In terms of tissue distribution, red blood cells.

The chain is Hemoglobin subunit delta (HBD) from Loxodonta africana (African elephant).